The following is a 149-amino-acid chain: Deoxyuridine 5'-triphosphate nucleotidohydrolase (149 aa).

Substrate contacts are provided by residues 66–68, N79, 83–85, and K93; these read RSG and TID.

This sequence belongs to the dUTPase family. Mg(2+) is required as a cofactor.

The enzyme catalyses dUTP + H2O = dUMP + diphosphate + H(+). Its pathway is pyrimidine metabolism; dUMP biosynthesis; dUMP from dCTP (dUTP route): step 2/2. In terms of biological role, this enzyme is involved in nucleotide metabolism: it produces dUMP, the immediate precursor of thymidine nucleotides and it decreases the intracellular concentration of dUTP so that uracil cannot be incorporated into DNA. The chain is Deoxyuridine 5'-triphosphate nucleotidohydrolase from Corynebacterium glutamicum (strain ATCC 13032 / DSM 20300 / JCM 1318 / BCRC 11384 / CCUG 27702 / LMG 3730 / NBRC 12168 / NCIMB 10025 / NRRL B-2784 / 534).